The following is a 318-amino-acid chain: uncharacterized protein (318 aa).

The protein belongs to the asfivirus F317L family.

The protein resides in the virion. This is an uncharacterized protein from African swine fever virus (isolate Tick/Malawi/Lil 20-1/1983) (ASFV).